The following is a 90-amino-acid chain: Nodulation protein F (90 aa).

Residues Q4 to A89 enclose the Carrier domain. S46 bears the O-(pantetheine 4'-phosphoryl)serine mark. A disordered region spans residues R65–H90. Residues R78–H90 are compositionally biased toward basic residues.

In terms of processing, 4'-phosphopantetheine is transferred from CoA to a specific serine of apo-NodF.

Proposed to synthesize nod factor fatty acyl chain. Involved in trans-2,trans-4,trans-6,cis-11-octadecatetraenoic acid biosynthesis. This chain is Nodulation protein F (nodF), found in Rhizobium meliloti (Ensifer meliloti).